A 681-amino-acid polypeptide reads, in one-letter code: Chaperone protein htpG (681 aa).

The interval 1–326 (MQKGNIGVTT…SPDIPLNVSR (326 aa)) is a; substrate-binding. The b stretch occupies residues 327–545 (SYLQSDSNVK…YMRRMKEMAN (219 aa)). The tract at residues 546 to 681 (IQAGMSFYGE…NFVKRSIELI (136 aa)) is c. The segment at 601 to 620 (DALKKKQEGKKDEDIPTAEK) is disordered.

This sequence belongs to the heat shock protein 90 family. As to quaternary structure, homodimer.

Its subcellular location is the cytoplasm. Its function is as follows. Molecular chaperone. Has ATPase activity. The chain is Chaperone protein htpG from Bacteroides fragilis (strain 638R).